The chain runs to 340 residues: Protein B17 (340 aa).

The protein belongs to the orthopoxvirus B17 protein family.

The sequence is that of Protein B17 from Vaccinia virus (strain Western Reserve) (VACV).